We begin with the raw amino-acid sequence, 394 residues long: Ornithine aminotransferase 1 (394 aa).

N6-(pyridoxal phosphate)lysine is present on Lys252.

It belongs to the class-III pyridoxal-phosphate-dependent aminotransferase family. OAT subfamily. Pyridoxal 5'-phosphate serves as cofactor.

Its subcellular location is the cytoplasm. The catalysed reaction is a 2-oxocarboxylate + L-ornithine = L-glutamate 5-semialdehyde + an L-alpha-amino acid. The protein operates within amino-acid biosynthesis; L-proline biosynthesis; L-glutamate 5-semialdehyde from L-ornithine: step 1/1. In terms of biological role, catalyzes the interconversion of ornithine to glutamate semialdehyde. The sequence is that of Ornithine aminotransferase 1 from Staphylococcus aureus (strain MRSA252).